Reading from the N-terminus, the 965-residue chain is Glycine dehydrogenase (decarboxylating) (965 aa).

An N6-(pyridoxal phosphate)lysine modification is found at lysine 711.

Belongs to the GcvP family. The glycine cleavage system is composed of four proteins: P, T, L and H. It depends on pyridoxal 5'-phosphate as a cofactor.

It carries out the reaction N(6)-[(R)-lipoyl]-L-lysyl-[glycine-cleavage complex H protein] + glycine + H(+) = N(6)-[(R)-S(8)-aminomethyldihydrolipoyl]-L-lysyl-[glycine-cleavage complex H protein] + CO2. Its function is as follows. The glycine cleavage system catalyzes the degradation of glycine. The P protein binds the alpha-amino group of glycine through its pyridoxal phosphate cofactor; CO(2) is released and the remaining methylamine moiety is then transferred to the lipoamide cofactor of the H protein. The chain is Glycine dehydrogenase (decarboxylating) from Psychrobacter cryohalolentis (strain ATCC BAA-1226 / DSM 17306 / VKM B-2378 / K5).